Consider the following 175-residue polypeptide: Peptide deformylase (175 aa).

Residues C98 and H140 each coordinate Fe cation. The active site involves E141. Position 144 (H144) interacts with Fe cation.

The protein belongs to the polypeptide deformylase family. It depends on Fe(2+) as a cofactor.

The catalysed reaction is N-terminal N-formyl-L-methionyl-[peptide] + H2O = N-terminal L-methionyl-[peptide] + formate. In terms of biological role, removes the formyl group from the N-terminal Met of newly synthesized proteins. Requires at least a dipeptide for an efficient rate of reaction. N-terminal L-methionine is a prerequisite for activity but the enzyme has broad specificity at other positions. The sequence is that of Peptide deformylase from Bradyrhizobium sp. (strain BTAi1 / ATCC BAA-1182).